The chain runs to 85 residues: RNA-binding protein Hfq (85 aa).

Residues 9-68 (DPFLNALRRERVPVSIYLVNGIKLQGQVESFDQFVILLKNTVSQMVYKHAISTVVPARPF) form the Sm domain.

Belongs to the Hfq family. In terms of assembly, homohexamer.

RNA chaperone that binds small regulatory RNA (sRNAs) and mRNAs to facilitate mRNA translational regulation in response to envelope stress, environmental stress and changes in metabolite concentrations. Also binds with high specificity to tRNAs. This Shewanella frigidimarina (strain NCIMB 400) protein is RNA-binding protein Hfq.